The primary structure comprises 418 residues: Tyrosine--tRNA ligase (418 aa).

Tyr34 lines the L-tyrosine pocket. The 'HIGH' region motif lies at 39–48; the sequence is PTADSLHLGH. L-tyrosine is bound by residues Tyr169 and Gln173. The short motif at 229–233 is the 'KMSKS' region element; it reads KFGKS. Lys232 provides a ligand contact to ATP. In terms of domain architecture, S4 RNA-binding spans 352–418; that stretch reads LNIVEILVSS…GKKKYAVLTY (67 aa).

This sequence belongs to the class-I aminoacyl-tRNA synthetase family. TyrS type 1 subfamily. Homodimer.

It is found in the cytoplasm. It carries out the reaction tRNA(Tyr) + L-tyrosine + ATP = L-tyrosyl-tRNA(Tyr) + AMP + diphosphate + H(+). Catalyzes the attachment of tyrosine to tRNA(Tyr) in a two-step reaction: tyrosine is first activated by ATP to form Tyr-AMP and then transferred to the acceptor end of tRNA(Tyr). In Streptococcus uberis (strain ATCC BAA-854 / 0140J), this protein is Tyrosine--tRNA ligase.